The chain runs to 485 residues: Glycogen synthase (485 aa).

Residue Lys-15 coordinates ADP-alpha-D-glucose.

It belongs to the glycosyltransferase 1 family. Bacterial/plant glycogen synthase subfamily.

The catalysed reaction is [(1-&gt;4)-alpha-D-glucosyl](n) + ADP-alpha-D-glucose = [(1-&gt;4)-alpha-D-glucosyl](n+1) + ADP + H(+). It participates in glycan biosynthesis; glycogen biosynthesis. Synthesizes alpha-1,4-glucan chains using ADP-glucose. The chain is Glycogen synthase from Fervidobacterium nodosum (strain ATCC 35602 / DSM 5306 / Rt17-B1).